Here is a 155-residue protein sequence, read N- to C-terminus: 6,7-dimethyl-8-ribityllumazine synthase (155 aa).

5-amino-6-(D-ribitylamino)uracil-binding positions include tryptophan 23, 57–59 (AWE), and 81–83 (CVI). (2S)-2-hydroxy-3-oxobutyl phosphate is bound at residue 86–87 (DT). Histidine 89 functions as the Proton donor in the catalytic mechanism. Asparagine 114 contributes to the 5-amino-6-(D-ribitylamino)uracil binding site. Arginine 128 is a binding site for (2S)-2-hydroxy-3-oxobutyl phosphate.

The protein belongs to the DMRL synthase family. In terms of assembly, forms an icosahedral capsid composed of 60 subunits, arranged as a dodecamer of pentamers.

It carries out the reaction (2S)-2-hydroxy-3-oxobutyl phosphate + 5-amino-6-(D-ribitylamino)uracil = 6,7-dimethyl-8-(1-D-ribityl)lumazine + phosphate + 2 H2O + H(+). The protein operates within cofactor biosynthesis; riboflavin biosynthesis; riboflavin from 2-hydroxy-3-oxobutyl phosphate and 5-amino-6-(D-ribitylamino)uracil: step 1/2. Functionally, catalyzes the formation of 6,7-dimethyl-8-ribityllumazine by condensation of 5-amino-6-(D-ribitylamino)uracil with 3,4-dihydroxy-2-butanone 4-phosphate. This is the penultimate step in the biosynthesis of riboflavin. In Stenotrophomonas maltophilia (strain R551-3), this protein is 6,7-dimethyl-8-ribityllumazine synthase.